A 302-amino-acid polypeptide reads, in one-letter code: tRNA dimethylallyltransferase (302 aa).

8–15 (GSSGSGKS) is a binding site for ATP. 10 to 15 (SGSGKS) provides a ligand contact to substrate. The interaction with substrate tRNA stretch occupies residues 33–36 (DSLS).

Belongs to the IPP transferase family. In terms of assembly, monomer. It depends on Mg(2+) as a cofactor.

The catalysed reaction is adenosine(37) in tRNA + dimethylallyl diphosphate = N(6)-dimethylallyladenosine(37) in tRNA + diphosphate. Catalyzes the transfer of a dimethylallyl group onto the adenine at position 37 in tRNAs that read codons beginning with uridine, leading to the formation of N6-(dimethylallyl)adenosine (i(6)A). In Helicobacter hepaticus (strain ATCC 51449 / 3B1), this protein is tRNA dimethylallyltransferase.